Consider the following 1182-residue polypeptide: DNA-directed RNA polymerase subunit beta (1182 aa).

Residues 1150–1162 (DEEVEMKDEDDDN) are compositionally biased toward acidic residues. The segment at 1150–1182 (DEEVEMKDEDDDNIPNATSALEQVVQPTVTEEE) is disordered. Positions 1171–1182 (EQVVQPTVTEEE) are enriched in low complexity.

This sequence belongs to the RNA polymerase beta chain family. The RNAP catalytic core consists of 2 alpha, 1 beta, 1 beta' and 1 omega subunit. When a sigma factor is associated with the core the holoenzyme is formed, which can initiate transcription.

The enzyme catalyses RNA(n) + a ribonucleoside 5'-triphosphate = RNA(n+1) + diphosphate. In terms of biological role, DNA-dependent RNA polymerase catalyzes the transcription of DNA into RNA using the four ribonucleoside triphosphates as substrates. This is DNA-directed RNA polymerase subunit beta from Exiguobacterium sp. (strain ATCC BAA-1283 / AT1b).